The primary structure comprises 159 residues: Serine-protein kinase RsbW (159 aa).

This sequence belongs to the anti-sigma-factor family.

The catalysed reaction is L-seryl-[protein] + ATP = O-phospho-L-seryl-[protein] + ADP + H(+). It catalyses the reaction L-threonyl-[protein] + ATP = O-phospho-L-threonyl-[protein] + ADP + H(+). In terms of biological role, negative regulator of sigma-B activity. Phosphorylates and inactivates its specific antagonist protein, RsbV. Upon phosphorylation of RsbV, RsbW is released and binds to sigma-B, thereby blocking its ability to form an RNA polymerase holoenzyme (E-sigma-B). The protein is Serine-protein kinase RsbW of Staphylococcus aureus (strain MSSA476).